Reading from the N-terminus, the 237-residue chain is 2-C-methyl-D-erythritol 4-phosphate cytidylyltransferase (237 aa).

It belongs to the IspD/TarI cytidylyltransferase family. IspD subfamily.

The enzyme catalyses 2-C-methyl-D-erythritol 4-phosphate + CTP + H(+) = 4-CDP-2-C-methyl-D-erythritol + diphosphate. Its pathway is isoprenoid biosynthesis; isopentenyl diphosphate biosynthesis via DXP pathway; isopentenyl diphosphate from 1-deoxy-D-xylulose 5-phosphate: step 2/6. In terms of biological role, catalyzes the formation of 4-diphosphocytidyl-2-C-methyl-D-erythritol from CTP and 2-C-methyl-D-erythritol 4-phosphate (MEP). The chain is 2-C-methyl-D-erythritol 4-phosphate cytidylyltransferase from Paraburkholderia xenovorans (strain LB400).